Reading from the N-terminus, the 228-residue chain is Orotidine 5'-phosphate decarboxylase (228 aa).

Residues Asp-8, Lys-30, 59 to 68, Thr-118, Arg-178, Gln-187, Gly-207, and Arg-208 contribute to the substrate site; that span reads DLKLHDIPNT. Lys-61 acts as the Proton donor in catalysis.

This sequence belongs to the OMP decarboxylase family. Type 1 subfamily. Homodimer.

It catalyses the reaction orotidine 5'-phosphate + H(+) = UMP + CO2. It functions in the pathway pyrimidine metabolism; UMP biosynthesis via de novo pathway; UMP from orotate: step 2/2. In terms of biological role, catalyzes the decarboxylation of orotidine 5'-monophosphate (OMP) to uridine 5'-monophosphate (UMP). This is Orotidine 5'-phosphate decarboxylase from Wolinella succinogenes (strain ATCC 29543 / DSM 1740 / CCUG 13145 / JCM 31913 / LMG 7466 / NCTC 11488 / FDC 602W) (Vibrio succinogenes).